We begin with the raw amino-acid sequence, 482 residues long: ATP synthase subunit beta (482 aa).

Residue 162–169 coordinates ATP; it reads GGAGVGKT.

It belongs to the ATPase alpha/beta chains family. F-type ATPases have 2 components, CF(1) - the catalytic core - and CF(0) - the membrane proton channel. CF(1) has five subunits: alpha(3), beta(3), gamma(1), delta(1), epsilon(1). CF(0) has four main subunits: a(1), b(1), b'(1) and c(9-12).

The protein resides in the cellular thylakoid membrane. The enzyme catalyses ATP + H2O + 4 H(+)(in) = ADP + phosphate + 5 H(+)(out). In terms of biological role, produces ATP from ADP in the presence of a proton gradient across the membrane. The catalytic sites are hosted primarily by the beta subunits. This chain is ATP synthase subunit beta, found in Trichormus variabilis (strain ATCC 29413 / PCC 7937) (Anabaena variabilis).